The primary structure comprises 233 residues: Bcl-2-like protein 1 (233 aa).

A BH4 motif is present at residues 4–24 (SNRELVVDFLSYKLSQKGYSW). The tract at residues 27 to 73 (FSDVEENRTEAPEETEPERETPSAINGNPSWHLADSPAVNGATGHSS) is disordered. Serine 49 bears the Phosphoserine; by PLK3 mark. Serine 62 bears the Phosphoserine; by CDK1 mark. Residues 86–100 (VKQALREAGDEFELR) carry the BH3 motif. The short motif at 129 to 148 (ELFRDGVNWGRIVAFFSFGG) is the BH1 element. A BH2 motif is present at residues 180 to 195 (PWIQENGGWDTFVDLY). A helical membrane pass occupies residues 210-226 (FNRWFLTGMTVAGVVLL).

It belongs to the Bcl-2 family. In terms of assembly, homodimer. Interacts with BCL2L11. Interacts with BAD. Interacts with PGAM5. Interacts with HEBP2. Interacts with p53/TP53 and BBC3; interaction with BBC3 disrupts the interaction with p53/TP53. Interacts with ATP5F1A and ATP5F1B; the interactions mediate the association of isoform Bcl-X(L) with the mitochondrial membrane ATP synthase F(1)F(0) ATP synthase. Interacts with VDAC1. Interacts with BCL2L11 (via BH3). Interacts with RNF183. Interacts with GIMAP3/IAN4 and GIMAP5/IAN5. Interacts with GIMAP5 and HSPA8/HSC70; the interaction between HSPA8 and BCL2L1 is impaired in the absence of GIMAP5. Interacts with isoform 4 of CLU; this interaction releases and activates BAX and promotes cell death. Forms heterodimers with BAX, BAK or BCL2; heterodimerization with BAX does not seem to be required for anti-apoptotic activity. Interacts with isoform 1 of SIVA1; the interaction inhibits the anti-apoptotic activity. Interacts with IKZF3. Interacts with RTL10/BOP. Interacts with DNM1L and CLTA; DNM1L and BCL2L1 isoform BCL-X(L) may form a complex in synaptic vesicles that also contains clathrin and MFF. Interacts (via the loop between motifs BH4 and BH3) with NLRP1 (via LRR repeats), but not with NLRP2, NLRP3, NLRP4, PYCARD, nor MEFV. Interacts with BECN1. In terms of processing, proteolytically cleaved by caspases during apoptosis. The cleaved protein, lacking the BH4 motif, has pro-apoptotic activity. Phosphorylated on Ser-62 by CDK1. This phosphorylation is partial in normal mitotic cells, but complete in G2-arrested cells upon DNA-damage, thus promoting subsequent apoptosis probably by triggering caspases-mediated proteolysis. Phosphorylated by PLK3, leading to regulate the G2 checkpoint and progression to cytokinesis during mitosis. Phosphorylation at Ser-49 appears during the S phase and G2, disappears rapidly in early mitosis during prometaphase, metaphase and early anaphase, and re-appears during telophase and cytokinesis. Post-translationally, ubiquitinated by RNF183 during prolonged ER stress, leading to degradation by the proteosome. In terms of tissue distribution, expressed in most tissues. Bcl-X(beta) is specifically expressed in cerebellum, heart, and thymus. In the ovary, the predominant form is Bcl-X(L), with a small but detectable level of Bcl-X(S).

It localises to the mitochondrion inner membrane. The protein localises to the mitochondrion outer membrane. It is found in the mitochondrion matrix. The protein resides in the cytoplasmic vesicle. Its subcellular location is the secretory vesicle. It localises to the synaptic vesicle membrane. The protein localises to the cytoplasm. It is found in the cytosol. The protein resides in the cytoskeleton. Its subcellular location is the microtubule organizing center. It localises to the centrosome. The protein localises to the nucleus membrane. In terms of biological role, potent inhibitor of cell death. Inhibits activation of caspases. Appears to regulate cell death by blocking the voltage-dependent anion channel (VDAC) by binding to it and preventing the release of the caspase activator, CYC1, from the mitochondrial membrane. Also acts as a regulator of G2 checkpoint and progression to cytokinesis during mitosis. Functionally, isoform Bcl-X(L) also regulates presynaptic plasticity, including neurotransmitter release and recovery, number of axonal mitochondria as well as size and number of synaptic vesicle clusters. During synaptic stimulation, increases ATP availability from mitochondria through regulation of mitochondrial membrane ATP synthase F(1)F(0) activity and regulates endocytic vesicle retrieval in hippocampal neurons through association with DMN1L and stimulation of its GTPase activity in synaptic vesicles. May attenuate inflammation impairing NLRP1-inflammasome activation, hence CASP1 activation and IL1B release. Its function is as follows. Isoform Bcl-X(S) promotes apoptosis. This chain is Bcl-2-like protein 1 (Bcl2l1), found in Rattus norvegicus (Rat).